Reading from the N-terminus, the 55-residue chain is Large ribosomal subunit protein bL33 (55 aa).

Belongs to the bacterial ribosomal protein bL33 family.

The sequence is that of Large ribosomal subunit protein bL33 from Bartonella henselae (strain ATCC 49882 / DSM 28221 / CCUG 30454 / Houston 1) (Rochalimaea henselae).